The chain runs to 460 residues: uncharacterized protein (460 aa).

Positions 8 to 66 (PVEKNEFIDVVFEDLTHDGAGVAKVKGYPIFVKNGLPGEEAQIKIIKVKKNFAFGRLMK) constitute a TRAM domain. Residues Cys-79, Cys-85, Cys-88, and Cys-166 each contribute to the [4Fe-4S] cluster site. Residues Gln-290, Tyr-319, Glu-340, and Asp-388 each coordinate S-adenosyl-L-methionine. Cys-415 functions as the Nucleophile in the catalytic mechanism.

The protein belongs to the class I-like SAM-binding methyltransferase superfamily. RNA M5U methyltransferase family.

This is an uncharacterized protein from Bacillus cereus (strain ATCC 10987 / NRS 248).